Consider the following 408-residue polypeptide: MVNLEIILGVVMFTAIVLALVAIILAARARLVSTGDVTIRINGEKEVTAPAGGKLLQTLANSGIFLSSACGGGGTCAQCKCKVTSGGGSMLSTEQSHFTRRDEKEGYRLSCQVSVKQDMDVEVPEEVFGVKAWECTVESNPNVATFIKELTLKLPEGENVDFRAGGYVQLEAPAHTVNYKDFDIEEEYRGDWDKFNLWKFVSKVDETVIRAYSMANYPEEKGIVKFNIRIASPPPGKDDLPPGQMSSYVFSLKPGDKIKVYGPFGEFFAKDTDAEMVFVGGGAGMAPMRSHIFDQLKRLNSKRKISFWYGARSVREAFYTEEYDKLQEENENFEWHLALSDPQPEDNWEGKTGFIHNVLYESYLKDHPAPEDCEFYMCGPPMMNASVIKMLEDLGVEKENILLDDFGG.

Residues 6–26 form a helical membrane-spanning segment; that stretch reads IILGVVMFTAIVLALVAIILA. A 2Fe-2S ferredoxin-type domain is found at 35 to 127; the sequence is GDVTIRINGE…DMDVEVPEEV (93 aa). Residues C70, C76, C79, and C111 each contribute to the [2Fe-2S] cluster site. Residues 130–270 enclose the FAD-binding FR-type domain; the sequence is VKAWECTVES…YGPFGEFFAK (141 aa).

Belongs to the NqrF family. In terms of assembly, composed of six subunits; NqrA, NqrB, NqrC, NqrD, NqrE and NqrF. [2Fe-2S] cluster is required as a cofactor. FAD serves as cofactor.

Its subcellular location is the cell inner membrane. It carries out the reaction a ubiquinone + n Na(+)(in) + NADH + H(+) = a ubiquinol + n Na(+)(out) + NAD(+). Functionally, NQR complex catalyzes the reduction of ubiquinone-1 to ubiquinol by two successive reactions, coupled with the transport of Na(+) ions from the cytoplasm to the periplasm. The first step is catalyzed by NqrF, which accepts electrons from NADH and reduces ubiquinone-1 to ubisemiquinone by a one-electron transfer pathway. This Marinomonas sp. (strain MWYL1) protein is Na(+)-translocating NADH-quinone reductase subunit F.